The following is a 246-amino-acid chain: Mast cell protease 1 (246 aa).

Residues 1 to 18 (MQALLFLMALLLPSGAGA) form the signal peptide. Positions 19-20 (EE) are cleaved as a propeptide — activation peptide. Positions 21 to 244 (IIGGVEARPH…YVPWIKTVIN (224 aa)) constitute a Peptidase S1 domain. A disulfide bond links cysteine 50 and cysteine 66. Catalysis depends on histidine 65, which acts as the Charge relay system. Asparagine 102 is a glycosylation site (N-linked (GlcNAc...) asparagine). The active-site Charge relay system is aspartate 109. Disulfide bonds link cysteine 143-cysteine 208 and cysteine 174-cysteine 187. Catalysis depends on serine 202, which acts as the Charge relay system.

Belongs to the peptidase S1 family. Granzyme subfamily. Mucosal mast cells.

Its subcellular location is the secreted. The protein resides in the cytoplasmic granule. Functionally, has a chymotrypsin-like activity. This chain is Mast cell protease 1 (Mcpt1), found in Mus musculus (Mouse).